The sequence spans 1571 residues: Pentafunctional AROM polypeptide (1571 aa).

Residues 1–380 (MTSVEKVSIL…YQLKAHQVSK (380 aa)) are 3-dehydroquinate synthase. Residues 43–45 (DTN), 81–84 (ENNK), 112–114 (GGV), and Asp-117 contribute to the NAD(+) site. Arg-128 lines the 7-phospho-2-dehydro-3-deoxy-D-arabino-heptonate pocket. 137-138 (TS) is an NAD(+) binding site. Positions 144 and 150 each coordinate 7-phospho-2-dehydro-3-deoxy-D-arabino-heptonate. Lys-159 provides a ligand contact to NAD(+). Asn-160 serves as a coordination point for 7-phospho-2-dehydro-3-deoxy-D-arabino-heptonate. Residues 177–180 (FLET) and Asn-188 each bind NAD(+). Glu-192 is a Zn(2+) binding site. Residues 192 to 195 (EVVK) and Lys-244 contribute to the 7-phospho-2-dehydro-3-deoxy-D-arabino-heptonate site. Glu-254 (proton acceptor; for 3-dehydroquinate synthase activity) is an active-site residue. 7-phospho-2-dehydro-3-deoxy-D-arabino-heptonate contacts are provided by residues 258 to 262 (RNLLN) and His-265. His-265 is a Zn(2+) binding site. The active-site Proton acceptor; for 3-dehydroquinate synthase activity is His-269. 2 residues coordinate 7-phospho-2-dehydro-3-deoxy-D-arabino-heptonate: His-281 and Lys-352. Position 281 (His-281) interacts with Zn(2+). An EPSP synthase region spans residues 393-843 (VHPFDDKLIP…WDILHTKFKV (451 aa)). Cys-825 (for EPSP synthase activity) is an active-site residue. Residues 868-1058 (KRSIIVIGMR…IPKKRSFYTS (191 aa)) form a shikimate kinase region. 875–882 (GMRGAGKS) is an ATP binding site. The tract at residues 1059 to 1271 (LTFSDLTEVA…GNEGALDVAQ (213 aa)) is 3-dehydroquinase. The active-site Schiff-base intermediate with substrate; for 3-dehydroquinate dehydratase activity is the Lys-1204. The shikimate dehydrogenase stretch occupies residues 1284-1571 (EKHFWIVGNP…DVVHDAVVNQ (288 aa)).

In the N-terminal section; belongs to the sugar phosphate cyclases superfamily. Dehydroquinate synthase family. This sequence in the 2nd section; belongs to the EPSP synthase family. The protein in the 3rd section; belongs to the shikimate kinase family. It in the 4th section; belongs to the type-I 3-dehydroquinase family. In the C-terminal section; belongs to the shikimate dehydrogenase family. Homodimer. Requires Zn(2+) as cofactor.

It is found in the cytoplasm. It catalyses the reaction 7-phospho-2-dehydro-3-deoxy-D-arabino-heptonate = 3-dehydroquinate + phosphate. It carries out the reaction 3-dehydroquinate = 3-dehydroshikimate + H2O. The enzyme catalyses shikimate + NADP(+) = 3-dehydroshikimate + NADPH + H(+). The catalysed reaction is shikimate + ATP = 3-phosphoshikimate + ADP + H(+). It catalyses the reaction 3-phosphoshikimate + phosphoenolpyruvate = 5-O-(1-carboxyvinyl)-3-phosphoshikimate + phosphate. The protein operates within metabolic intermediate biosynthesis; chorismate biosynthesis; chorismate from D-erythrose 4-phosphate and phosphoenolpyruvate: step 2/7. It participates in metabolic intermediate biosynthesis; chorismate biosynthesis; chorismate from D-erythrose 4-phosphate and phosphoenolpyruvate: step 3/7. It functions in the pathway metabolic intermediate biosynthesis; chorismate biosynthesis; chorismate from D-erythrose 4-phosphate and phosphoenolpyruvate: step 4/7. Its pathway is metabolic intermediate biosynthesis; chorismate biosynthesis; chorismate from D-erythrose 4-phosphate and phosphoenolpyruvate: step 5/7. The protein operates within metabolic intermediate biosynthesis; chorismate biosynthesis; chorismate from D-erythrose 4-phosphate and phosphoenolpyruvate: step 6/7. In terms of biological role, the AROM polypeptide catalyzes 5 consecutive enzymatic reactions in prechorismate polyaromatic amino acid biosynthesis. The polypeptide is Pentafunctional AROM polypeptide (Scheffersomyces stipitis (strain ATCC 58785 / CBS 6054 / NBRC 10063 / NRRL Y-11545) (Yeast)).